Here is a 217-residue protein sequence, read N- to C-terminus: MELVLGPLEARVIGALIEKEICTPDQYPLSLNALVNACNQKSNREPVLELSELDIRAVVDELIRKRLVVNTAGFNARVPRYQHRFCNTEFGTLKFSEQELGIVCELLLRGPQTPGELRSRTNRLCSFDDVTQVDAALAALIEQGPYVVKLPREPGKRESRYAHLFSGEVDLQALAEASPASSYASPAADRLSVLEEEVETLKLQLQALEARLAQLEG.

The protein belongs to the UPF0502 family.

The chain is UPF0502 protein ASA_1460 from Aeromonas salmonicida (strain A449).